The following is a 313-amino-acid chain: DNA-directed RNA polymerase subunit alpha (313 aa).

Residues 1-226 form an alpha N-terminal domain (alpha-NTD) region; it reads MLEIEKPKIE…EHLQLFVNLN (226 aa). The interval 243 to 313 is alpha C-terminal domain (alpha-CTD); that stretch reads KEKLAEMPIE…MGLSLRKEEE (71 aa).

This sequence belongs to the RNA polymerase alpha chain family. As to quaternary structure, homodimer. The RNAP catalytic core consists of 2 alpha, 1 beta, 1 beta' and 1 omega subunit. When a sigma factor is associated with the core the holoenzyme is formed, which can initiate transcription.

The enzyme catalyses RNA(n) + a ribonucleoside 5'-triphosphate = RNA(n+1) + diphosphate. Functionally, DNA-dependent RNA polymerase catalyzes the transcription of DNA into RNA using the four ribonucleoside triphosphates as substrates. This Carboxydothermus hydrogenoformans (strain ATCC BAA-161 / DSM 6008 / Z-2901) protein is DNA-directed RNA polymerase subunit alpha.